The following is a 319-amino-acid chain: Cell division protein PomZ (319 aa).

Position 61 to 68 (61 to 68 (KGGTGKTS)) interacts with ATP.

Belongs to the ParA family. In terms of assembly, interacts with FtsZ in pull-down experiments.

It is found in the cytoplasm. In terms of biological role, spatial regulator of cell division that is involved in identifying the incipient division site, recruiting FtsZ to the division site and stabilizing the Z-ring. Binds ATP and GTP. The chain is Cell division protein PomZ from Myxococcus xanthus (strain DK1622).